The following is a 195-amino-acid chain: FK506-binding protein 2 (195 aa).

A signal peptide spans 1 to 19 (MKAALFLSALASTAVGVVA). Positions 39 to 127 (GDGVHMHYRG…VFETELVGID (89 aa)) constitute a PPIase FKBP-type domain. The Prevents secretion from ER signature appears at 192–195 (HEEL).

Belongs to the FKBP-type PPIase family. FKBP2 subfamily.

The protein resides in the endoplasmic reticulum. The enzyme catalyses [protein]-peptidylproline (omega=180) = [protein]-peptidylproline (omega=0). With respect to regulation, inhibited by both FK506 and rapamycin. In terms of biological role, PPIases accelerate the folding of proteins. It catalyzes the cis-trans isomerization of proline imidic peptide bonds in oligopeptides. This chain is FK506-binding protein 2 (FPR2), found in Gibberella zeae (strain ATCC MYA-4620 / CBS 123657 / FGSC 9075 / NRRL 31084 / PH-1) (Wheat head blight fungus).